We begin with the raw amino-acid sequence, 74 residues long: Guanine nucleotide-binding protein G(T) subunit gamma-T1 (74 aa).

A Cysteine methyl ester modification is found at Cys-71. Residue Cys-71 is the site of S-farnesyl cysteine attachment. A propeptide spans 72–74 (VIS) (removed in mature form).

The protein belongs to the G protein gamma family. G proteins are composed of 3 units, alpha, beta and gamma. As to expression, retinal rod outer segment.

It is found in the cell membrane. In terms of biological role, guanine nucleotide-binding proteins (G proteins) are involved as a modulator or transducer in various transmembrane signaling systems. The beta and gamma chains are required for the GTPase activity, for replacement of GDP by GTP, and for G protein-effector interaction. The chain is Guanine nucleotide-binding protein G(T) subunit gamma-T1 (GNGT1) from Canis lupus familiaris (Dog).